The primary structure comprises 101 residues: Small ribosomal subunit protein bS6 (101 aa).

This sequence belongs to the bacterial ribosomal protein bS6 family.

Functionally, binds together with bS18 to 16S ribosomal RNA. In Micrococcus luteus (strain ATCC 4698 / DSM 20030 / JCM 1464 / CCM 169 / CCUG 5858 / IAM 1056 / NBRC 3333 / NCIMB 9278 / NCTC 2665 / VKM Ac-2230) (Micrococcus lysodeikticus), this protein is Small ribosomal subunit protein bS6.